The sequence spans 580 residues: M-phase inducer phosphatase 2 (580 aa).

The interval M1–Q24 is disordered. A Phosphoserine modification is found at S42. The span at S89–S107 shows a compositional bias: low complexity. Disordered regions lie at residues S89–S117 and N165–G196. A Phosphoserine; by MELK modification is found at S169. S249 bears the Phosphoserine mark. S323 is modified (phosphoserine; by MELK and MAPK14). The segment at P331 to V370 is disordered. The segment covering K334–T344 has biased composition (basic and acidic residues). Phosphoserine; by AURKA is present on S353. Position 375 is a phosphoserine; by BRSK1 and MAPK14 (S375). Residues I431–E538 enclose the Rhodanese domain. S470 bears the Phosphoserine mark. Residue C487 is part of the active site. Phosphoserine is present on S563.

Belongs to the MPI phosphatase family. Interacts with MAPK14 and 14-3-3 proteins. Phosphorylated by BRSK1 in vitro. Phosphorylated by CHEK1, which inhibits the activity of this protein. Phosphorylation at Ser-353 by AURKA might locally participate in the control of the onset of mitosis. Phosphorylation by MELK at Ser-169 promotes localization to the centrosome and the spindle poles during mitosis. Phosphorylation at Ser-323 and Ser-375 by MAPK14 is required for binding to 14-3-3 proteins.

The protein localises to the cytoplasm. It is found in the cytoskeleton. Its subcellular location is the microtubule organizing center. It localises to the centrosome. The protein resides in the spindle pole. The enzyme catalyses O-phospho-L-tyrosyl-[protein] + H2O = L-tyrosyl-[protein] + phosphate. Its activity is regulated as follows. Stimulated by B-type cyclins. Functionally, tyrosine protein phosphatase which functions as a dosage-dependent inducer of mitotic progression. Directly dephosphorylates CDK1 and stimulates its kinase activity. Required for G2/M phases of the cell cycle progression and abscission during cytokinesis in a ECT2-dependent manner. The three isoforms seem to have a different level of activity. In Homo sapiens (Human), this protein is M-phase inducer phosphatase 2 (CDC25B).